The following is a 240-amino-acid chain: Izumo sperm-egg fusion protein 3 (240 aa).

Residues 1-22 form the signal peptide; sequence MGDLWLLLLLPLSLAAFHGVKG. Residues 23–176 are Extracellular-facing; sequence CLECDPKFIE…DDPKKAESRE (154 aa). The chain crosses the membrane as a helical span at residues 177 to 197; it reads IGLFLILLAEGVILGGVLLLF. Topologically, residues 198 to 240 are cytoplasmic; it reads HFCISHQRKMKAIRRSLKTYLEKKLEELMGIKDEKEKDFRGRE.

This sequence belongs to the Izumo family. As to quaternary structure, monomer and homodimer.

Its subcellular location is the cell membrane. This chain is Izumo sperm-egg fusion protein 3 (IZUMO3), found in Bos taurus (Bovine).